The sequence spans 208 residues: Ribosomal RNA large subunit methyltransferase E (208 aa).

S-adenosyl-L-methionine-binding residues include Gly63, Trp65, Asp83, Asp99, and Asp124. Residue Lys164 is the Proton acceptor of the active site.

This sequence belongs to the class I-like SAM-binding methyltransferase superfamily. RNA methyltransferase RlmE family.

It localises to the cytoplasm. It carries out the reaction uridine(2552) in 23S rRNA + S-adenosyl-L-methionine = 2'-O-methyluridine(2552) in 23S rRNA + S-adenosyl-L-homocysteine + H(+). Its function is as follows. Specifically methylates the uridine in position 2552 of 23S rRNA at the 2'-O position of the ribose in the fully assembled 50S ribosomal subunit. This chain is Ribosomal RNA large subunit methyltransferase E, found in Salmonella choleraesuis (strain SC-B67).